A 94-amino-acid polypeptide reads, in one-letter code: MRAGFSDFQLIRDQVLFLQDQAQRLTEWLQLSGFENPVSESTTLCLREREKRIPTCVAVCVPSPGTVHTALLHPTTLSQSRSSSEAKMLIIHTA.

As to expression, found in lung alveolar cells type I and II, as well as alveolar macrophages (at protein level). Detected also in testis and kidney. Expressed by different tissues of the ocular system like cornea, conjuctiva, lacrimal gland, eyelid and efferent tear ducts (at protein level). From these tissues is secreted into the tear film (at protein level).

The protein resides in the cytoplasm. It localises to the secreted. Its function is as follows. Putative surfactant protein. May be involved in wound healing and in the reduction of the surface tension at the ocular surface. The chain is Surfactant-associated protein 3 (SFTA3) from Homo sapiens (Human).